We begin with the raw amino-acid sequence, 782 residues long: Protein bicaudal D (782 aa).

The stretch at 15–77 forms a coiled coil; the sequence is VQDLQMEVER…RHELDITQEA (63 aa). A Phosphoserine modification is found at serine 103. Residues 107-249 are a coiled coil; that stretch reads ETSLNLQIFD…LETLQGEREA (143 aa). Phosphoserine occurs at positions 285, 288, and 305. The residue at position 306 (threonine 306) is a Phosphothreonine. At serine 310 the chain carries Phosphoserine. Coiled-coil stretches lie at residues 320-368 and 444-477; these read SEIH…FMSR and TTTLRNEVTNLKNKLLATEQKSLDLQSDVQTLTH. Position 528 is a phosphoserine (serine 528). Coiled coils occupy residues 603 to 630 and 695 to 743; these read EKVNTEEMEELQEQIVKLKSLLSVKREQ and CEEY…MEMD. The interval 699–722 is interaction with Rab6; the sequence is VTQVDDLNRQLEAAEEEKKTLNQL. The tract at residues 744-782 is disordered; the sequence is REMRHVRRPMPAQRGTSGKSSFSTRPSSRNPASSNANPF. Polar residues predominate over residues 757 to 767; that stretch reads RGTSGKSSFST. Residues 768-782 are compositionally biased toward low complexity; it reads RPSSRNPASSNANPF.

The protein belongs to the BicD family. May homodimerize but does not interact with BicDR. Interacts (via C-terminal domain) with Rab6. In terms of tissue distribution, in ovaries, expressed in oocyte and nurse cells.

Its subcellular location is the cytoplasm. It is found in the cytoskeleton. In terms of biological role, this protein is essential for differentiation. It may play a role in localizing of Nanos (a maternal determinant) activity in oocytes. Functions redundantly with BicDR. During oogenesis, plays a specific role, together with Rab6 but independently of Sec5, in the polarization of the oocyte microtubule cytoskeleton, in oskar mRNA localization and in the anterodorsal secretion of grk. Plays a role in the biogenesis of annulate lamellae containing nuclear pore complex components. During macrochaetae development, together with BicDR, involved in Rab 6 and Spn-F stability and distribution and actin cytoskeleton organization. This Drosophila melanogaster (Fruit fly) protein is Protein bicaudal D.